The chain runs to 294 residues: Nucleophosmin (294 aa).

M1 is subject to N-acetylmethionine. The necessary for interaction with APEX1 stretch occupies residues 1 to 117; the sequence is MEDSMDMDMS…PVHISGQHLV (117 aa). Residues 1–186 are required for interaction with SENP3; the sequence is MEDSMDMDMS…DDDDFDDEEA (186 aa). S4 is subject to Phosphoserine; by PLK1 and PLK2. The residue at position 10 (S10) is a Phosphoserine. A Glycyl lysine isopeptide (Lys-Gly) (interchain with G-Cter in SUMO2) cross-link involves residue K27. Residue K32 is modified to N6-acetyllysine; alternate. Residue K32 forms a Glycyl lysine isopeptide (Lys-Gly) (interchain with G-Cter in SUMO1); alternate linkage. Residue K32 forms a Glycyl lysine isopeptide (Lys-Gly) (interchain with G-Cter in SUMO2); alternate linkage. Residue S43 is modified to Phosphoserine. Y67 is subject to Phosphotyrosine. Position 70 is a phosphoserine (S70). T75 and T95 each carry phosphothreonine. A compositionally biased stretch (acidic residues) spans 120 to 132; it reads EEDAESEDEEEED. The tract at residues 120 to 247 is disordered; that stretch reads EEDAESEDEE…PKGPSSVEDI (128 aa). S125 is modified (phosphoserine; by CDK2). S137 and S139 each carry phosphoserine. K141 is covalently cross-linked (Glycyl lysine isopeptide (Lys-Gly) (interchain with G-Cter in SUMO2)). K150 is subject to N6-acetyllysine; alternate. A Glycyl lysine isopeptide (Lys-Gly) (interchain with G-Cter in SUMO2); alternate cross-link involves residue K150. Residues 152–157 carry the Nuclear localization signal motif; the sequence is PQKKVK. K154 is modified (N6-acetyllysine). Residues 161–187 are compositionally biased toward acidic residues; the sequence is DEDDDDDDEEDDDEDDDDDDFDDEEAE. The interval 187–215 is interaction with NOP2; the sequence is EEKAPVKKSIRDTPAKNAQKSNQNGKDSK. The segment covering 188-200 has biased composition (basic and acidic residues); it reads EKAPVKKSIRDTP. Positions 191 to 197 match the Nuclear localization signal motif; the sequence is PVKKSIR. T199 bears the Phosphothreonine; by CDK1, CDK2 and CDK6 mark. Residues 202–222 are compositionally biased toward polar residues; the sequence is KNAQKSNQNGKDSKPSSTPRS. S207 is modified (ADP-ribosylserine). The residue at position 212 (K212) is an N6-acetyllysine. K215 is covalently cross-linked (Glycyl lysine isopeptide (Lys-Gly) (interchain with G-Cter in SUMO2)). A Phosphothreonine; by CDK1 modification is found at T219. Residues 223–235 are compositionally biased toward basic and acidic residues; that stretch reads KGQESFKKQEKTP. The residue at position 227 (S227) is a Phosphoserine. K229 is modified (N6-acetyllysine). At K230 the chain carries N6-acetyllysine; alternate. K230 is covalently cross-linked (Glycyl lysine isopeptide (Lys-Gly) (interchain with G-Cter in SUMO); alternate). A phosphothreonine; by CDK1 mark is found at T234 and T237. S242 and S243 each carry phosphoserine. A required for nucleolar localization region spans residues 243 to 294; that stretch reads SVEDIKAKMQASIEKGGSLPKVEAKFINYVKNCFRMTDQEAIQDLWQWRKSL. K248 participates in a covalent cross-link: Glycyl lysine isopeptide (Lys-Gly) (interchain with G-Cter in SUMO1); alternate. Residues K248 and K250 each participate in a glycyl lysine isopeptide (Lys-Gly) (interchain with G-Cter in SUMO2); alternate cross-link. K250 bears the N6-acetyllysine; alternate mark. The residue at position 254 (S254) is a Phosphoserine. An N6-acetyllysine; alternate modification is found at K257. K257 participates in a covalent cross-link: Glycyl lysine isopeptide (Lys-Gly) (interchain with G-Cter in SUMO1); alternate. A Glycyl lysine isopeptide (Lys-Gly) (interchain with G-Cter in SUMO2); alternate cross-link involves residue K257. An N6-acetyllysine modification is found at K257. At S260 the chain carries Phosphoserine. Glycyl lysine isopeptide (Lys-Gly) (interchain with G-Cter in SUMO2); alternate cross-links involve residues K263, K267, and K273. A Glycyl lysine isopeptide (Lys-Gly) (interchain with G-Cter in SUMO); alternate cross-link involves residue K263. An N6-acetyllysine; alternate mark is found at K267 and K273. K267 participates in a covalent cross-link: Glycyl lysine isopeptide (Lys-Gly) (interchain with G-Cter in SUMO1); alternate. K267 is modified (N6-succinyllysine; alternate). The residue at position 279 (T279) is a Phosphothreonine. K292 carries the N6-acetyllysine modification.

This sequence belongs to the nucleoplasmin family. In terms of assembly, decamer formed by two pentameric rings associated in a head-to-head fashion. Disulfide-linked dimers under certain conditions. The SWAP complex consists of NPM1, NCL, PARP1 and SWAP70. Interacts with NSUN2 and SENP3. Interacts with the methylated form of RPS10. Interacts (via N-terminal domain) with APEX1; the interaction is RNA-dependent and decreases in hydrogen peroxide-damaged cells. Interacts with isoform 1 of NEK2. Interacts with ROCK2 and BRCA2. Interacts with RPGR. Interacts with CENPW. Interacts with EIF2AK2/PKR. Interacts with CEBPA (isoform 4). Interacts with DDX31; this interaction prevents interaction between NPM1 and HDM2. Interacts with MYC; competitive with NOP53. Interacts with NOP53; the interaction is direct and competitive with MYC. Interacts with LRRC34. Interacts with RRP1B. Interacts with NPM3. Interacts with ALKBH2. Interacts with TTF1 (via C-terminal region). Interacts with NOP2. Interacts with ARID3C (via REKLES DOMAIN); the interaction mediates ARID3C nuclear shuttling. As to quaternary structure, (Microbial infection) Interacts with hepatitis delta virus S-HDAg. (Microbial infection) Interacts with HTLV1 Rex protein (via N-terminal nuclear localization signal). In terms of processing, acetylated at C-terminal lysine residues, thereby increasing affinity to histones. ADP-ribosylated. Post-translationally, phosphorylated at Ser-4 by PLK1 and PLK2. Phosphorylation at Ser-4 by PLK2 in S phase is required for centriole duplication and is sufficient to trigger centriole replication. Phosphorylation at Ser-4 by PLK1 takes place during mitosis. Phosphorylated by CDK2 at Ser-125 and Thr-199. Phosphorylation at Thr-199 may trigger initiation of centrosome duplication. Phosphorylated by CDK1 at Thr-199, Thr-219, Thr-234 and Thr-237 during cell mitosis. When these four sites are phosphorated, RNA-binding activity seem to be abolished. May be phosphorylated at Ser-70 by NEK2. The Thr-199 phosphorylated form has higher affinity for ROCK2. CDK6 triggers Thr-199 phosphorylation when complexed to Kaposi's sarcoma herpesvirus (KSHV) V-cyclin, leading to viral reactivation by reducing viral LANA levels. In terms of processing, sumoylated by ARF. Ubiquitinated. Ubiquitination leads to proteasomal degradation. Deubiquitinated by USP36.

It localises to the nucleus. It is found in the nucleolus. The protein localises to the nucleoplasm. The protein resides in the cytoplasm. Its subcellular location is the cytoskeleton. It localises to the microtubule organizing center. It is found in the centrosome. Its function is as follows. Involved in diverse cellular processes such as ribosome biogenesis, centrosome duplication, protein chaperoning, histone assembly, cell proliferation, and regulation of tumor suppressors p53/TP53 and ARF. Binds ribosome presumably to drive ribosome nuclear export. Associated with nucleolar ribonucleoprotein structures and bind single-stranded nucleic acids. Acts as a chaperonin for the core histones H3, H2B and H4. Stimulates APEX1 endonuclease activity on apurinic/apyrimidinic (AP) double-stranded DNA but inhibits APEX1 endonuclease activity on AP single-stranded RNA. May exert a control of APEX1 endonuclease activity within nucleoli devoted to repair AP on rDNA and the removal of oxidized rRNA molecules. In concert with BRCA2, regulates centrosome duplication. Regulates centriole duplication: phosphorylation by PLK2 is able to trigger centriole replication. Negatively regulates the activation of EIF2AK2/PKR and suppresses apoptosis through inhibition of EIF2AK2/PKR autophosphorylation. Antagonizes the inhibitory effect of ATF5 on cell proliferation and relieves ATF5-induced G2/M blockade. In complex with MYC enhances the transcription of MYC target genes. May act as chaperonin or cotransporter in the nucleolar localization of transcription termination factor TTF1. In Homo sapiens (Human), this protein is Nucleophosmin.